Here is a 99-residue protein sequence, read N- to C-terminus: NADH-ubiquinone oxidoreductase chain 4L (99 aa).

The next 3 membrane-spanning stretches (helical) occupy residues 4 to 24, 29 to 49, and 63 to 83; these read MFLMFYLSMIMFLFGCMVFVS, LLSTLLSLEYMVLSLFIFLFF, and FFLTFCVCEGVLGLSILVSMI.

Belongs to the complex I subunit 4L family.

Its subcellular location is the mitochondrion membrane. It catalyses the reaction a ubiquinone + NADH + 5 H(+)(in) = a ubiquinol + NAD(+) + 4 H(+)(out). Functionally, core subunit of the mitochondrial membrane respiratory chain NADH dehydrogenase (Complex I) that is believed to belong to the minimal assembly required for catalysis. Complex I functions in the transfer of electrons from NADH to the respiratory chain. The immediate electron acceptor for the enzyme is believed to be ubiquinone. The sequence is that of NADH-ubiquinone oxidoreductase chain 4L (mt:ND4L) from Anopheles gambiae (African malaria mosquito).